A 430-amino-acid chain; its full sequence is GTPase Obg (430 aa).

In terms of domain architecture, Obg spans 1-158 (MFIDKAKIYL…LTVVLELKLI (158 aa)). In terms of domain architecture, OBG-type G spans 159–330 (ADVGLVGFPN…LLSYVSKRLK (172 aa)). Residues 165 to 172 (GFPNVGKS), 190 to 194 (FTTLT), 212 to 215 (DIPG), 282 to 285 (NKTD), and 311 to 313 (SAA) contribute to the GTP site. Mg(2+)-binding residues include Ser-172 and Thr-192. An OCT domain is found at 351 to 430 (KYEETEDKYH…MYSVEFEYFN (80 aa)).

Belongs to the TRAFAC class OBG-HflX-like GTPase superfamily. OBG GTPase family. In terms of assembly, monomer. Mg(2+) is required as a cofactor.

The protein localises to the cytoplasm. Its function is as follows. An essential GTPase which binds GTP, GDP and possibly (p)ppGpp with moderate affinity, with high nucleotide exchange rates and a fairly low GTP hydrolysis rate. Plays a role in control of the cell cycle, stress response, ribosome biogenesis and in those bacteria that undergo differentiation, in morphogenesis control. The sequence is that of GTPase Obg from Alkaliphilus oremlandii (strain OhILAs) (Clostridium oremlandii (strain OhILAs)).